Here is a 348-residue protein sequence, read N- to C-terminus: Protein RecA (348 aa).

Position 65–72 (65–72) interacts with ATP; it reads GPESSGKT. The interval 328-348 is disordered; sequence SKPQAETSARLATQEELADDY.

It belongs to the RecA family.

It is found in the cytoplasm. Functionally, can catalyze the hydrolysis of ATP in the presence of single-stranded DNA, the ATP-dependent uptake of single-stranded DNA by duplex DNA, and the ATP-dependent hybridization of homologous single-stranded DNAs. It interacts with LexA causing its activation and leading to its autocatalytic cleavage. The polypeptide is Protein RecA (Ectopseudomonas oleovorans (Pseudomonas oleovorans)).